Reading from the N-terminus, the 84-residue chain is U21-theraphotoxin-Cg1b (84 aa).

The N-terminal stretch at M1–A21 is a signal peptide. The propeptide occupies E22–R47. 3 disulfide bridges follow: C49–C63, C56–C68, and C62–C76. At F82 the chain carries Phenylalanine amide.

Belongs to the neurotoxin 10 (Hwtx-1) family. 05 (F4a) subfamily. In terms of tissue distribution, expressed by the venom gland.

Its subcellular location is the secreted. Its function is as follows. Probable ion channel inhibitor. The polypeptide is U21-theraphotoxin-Cg1b (Chilobrachys guangxiensis (Chinese earth tiger tarantula)).